The following is a 328-amino-acid chain: Cytochrome f (328 aa).

The first 44 residues, 1 to 44, serve as a signal peptide directing secretion; that stretch reads MRTFNFLSFPQVHRQALVKAVLVAIATVSLLLTSDVINPQSAQA. Positions 45, 66, 69, and 70 each coordinate heme. A helical transmembrane segment spans residues 294–314; sequence IKGLVLFLGGIMLCQILLVIK.

This sequence belongs to the cytochrome f family. As to quaternary structure, the 4 large subunits of the cytochrome b6-f complex are cytochrome b6, subunit IV (17 kDa polypeptide, PetD), cytochrome f and the Rieske protein, while the 4 small subunits are PetG, PetL, PetM and PetN. The complex functions as a dimer. It depends on heme as a cofactor.

The protein resides in the cellular thylakoid membrane. Functionally, component of the cytochrome b6-f complex, which mediates electron transfer between photosystem II (PSII) and photosystem I (PSI), cyclic electron flow around PSI, and state transitions. The chain is Cytochrome f from Microcystis aeruginosa (strain NIES-843 / IAM M-2473).